The chain runs to 100 residues: MISEERLLKILLSPHVSEKTSISMEKFNTVVLKVLNNATKYEIKYAVKKIFDVDVDSIKTLKVKGKKKRQSNRIIQRSHWKKAYIKVKKGCNLDFIGNTE.

It belongs to the universal ribosomal protein uL23 family. In terms of assembly, part of the 50S ribosomal subunit. Contacts protein L29, and trigger factor when it is bound to the ribosome.

Functionally, one of the early assembly proteins it binds 23S rRNA. One of the proteins that surrounds the polypeptide exit tunnel on the outside of the ribosome. Forms the main docking site for trigger factor binding to the ribosome. The polypeptide is Large ribosomal subunit protein uL23 (Buchnera aphidicola subsp. Acyrthosiphon pisum (strain 5A)).